A 1200-amino-acid chain; its full sequence is NACHT, LRR and PYD domains-containing protein 5 (1200 aa).

The 92-residue stretch at 57 to 148 (SLTFSSYGLQ…SEKARDDMKR (92 aa)) folds into the Pyrin domain. Positions 142-152 (ARDDMKRHSPE) are enriched in basic and acidic residues. Positions 142–232 (ARDDMKRHSP…TEEQGHGGDT (91 aa)) are disordered. Over residues 173 to 182 (QAVQQDSATA) the composition is skewed to polar residues. Composition is skewed to low complexity over residues 192-202 (QAMEQEGATAA) and 209-221 (ISQA…ATAA). An NACHT domain is found at 280–602 (RTVVLHGKSG…ALYYVLEGLE (323 aa)). 286 to 293 (GKSGIGKS) is an ATP binding site. LRR repeat units follow at residues 704–727 (LNSF…SFCL), 730–753 (CPYL…AEAC), 780–803 (HPHL…TLCA), 809–832 (TCKI…LWRI), 836–863 (NRNL…ALKH), 865–892 (KCLL…ILTT), 893–916 (SPSL…PLSD), 950–973 (NRSL…LLCR), 979–1002 (HCSL…FLAL), 1007–1034 (NSWL…VMRE), 1036–1059 (SCHL…SLSC), 1064–1092 (SRHL…LKQK), and 1121–1142 (NRHL…MMKL).

The protein belongs to the NLRP family. As to quaternary structure, component of the subcortical maternal complex (SCMC), at least composed of NLRP5, KHDC3, OOEP, and TLE6 isoform 1. Within the complex, interacts with OOEP, KHDC3L and TLE6. The SCMC may facilitate translocation of its components between the nuclear and cytoplasmic compartments. As part of the SCMC interacts with the SCMC-associated protein ZBED3. As part of the SCMC interacts with the SCMC-associated protein CFL1/Cofilin-1. Interacts with PRKCE. Interacts with TUBB3 at cytoskeleton microtubules. Post-translationally, phosphorylated by PRKCE. Expressed in cumulus cells (at protein level). Highly abundant in oocytes and early embryos, however poorly expressed in somatic tissues such as the liver and spinal cord.

The protein resides in the cytoplasm. It is found in the cytoplasmic vesicle. Its subcellular location is the secretory vesicle. The protein localises to the cortical granule. It localises to the mitochondrion. The protein resides in the nucleus. It is found in the nucleolus. Its subcellular location is the golgi apparatus. Its function is as follows. Component of the subcortical maternal complex (SCMC), a multiprotein complex that plays a key role in early embryonic development. The SCMC complex is a structural constituent of cytoplasmic lattices, which consist in fibrous structures found in the cytoplasm of oocytes and preimplantation embryos. They are required to store maternal proteins critical for embryonic development, such as proteins that control epigenetic reprogramming of the preimplantation embryo, and prevent their degradation or activation. Required for the localization of cortical granules to the cortex of oocytes, via association with the cortical actin scaffold. Required for cortical actin clearance prior to oocyte exocytosis and prevention of polyspermy. Involved in regulating post-fertilization Ca(2+) release and endoplasmic reticulum storage (ER) storage via regulation of cellular localization. May be involved in the localization of mitochondria to the cytoplasm and perinuclear region in oocytes and early stage embryos, independent of its role in CPL formation. The protein is NACHT, LRR and PYD domains-containing protein 5 (NLRP5) of Homo sapiens (Human).